The following is a 188-amino-acid chain: Phosphatidylinositol N-acetylglucosaminyltransferase subunit H (188 aa).

Belongs to the PIGH family. As to quaternary structure, component of the glycosylphosphatidylinositol-N-acetylglucosaminyltransferase (GPI-GnT) complex composed at least by PIGA, PIGC, PIGH, PIGP, PIGQ, PIGY and DPM2. Interacts with PIGQ.

It is found in the cytoplasm. It functions in the pathway glycolipid biosynthesis; glycosylphosphatidylinositol-anchor biosynthesis. Functionally, part of the glycosylphosphatidylinositol-N-acetylglucosaminyltransferase (GPI-GnT) complex that catalyzes the transfer of N-acetylglucosamine from UDP-N-acetylglucosamine to phosphatidylinositol and participates in the first step of GPI biosynthesis. The polypeptide is Phosphatidylinositol N-acetylglucosaminyltransferase subunit H (Mus musculus (Mouse)).